A 237-amino-acid polypeptide reads, in one-letter code: MNQGYTQLSAPELKETKTSKLNKMNNFRSSPIAEIINKIPPDCGKIQNTTFPEFNPALRRRQHEQWPAYEKPIRVTDSMSPQLSSINCLPNLYPHGTLPLPNPYLSYLNHIEKVNCQDVKFSNWSVLHNSNNGFEIPTYFSPRTTQNMPCSEKVESWLERLPIFVGFDGYLFTNCFDYEYMLDWEETEFTFEKTSCMETDYSKALTDTDIIYIQEKKIEALIRNQYLKEYEFSQKDF.

It is found in the nucleus. The protein localises to the cytoplasm. The protein resides in the cytoskeleton. Its subcellular location is the microtubule organizing center. It localises to the spindle pole body. Involved in the pathway that organizes the shaping and sizing of the prospore membrane (PSM) during sporulation. Required to localize MPC54 to all four spindle pole bodies, and localize DON1 and SPO14 to four prospore membranes. This chain is Prospore formation at selected spindle poles protein 1 (PFS1), found in Saccharomyces cerevisiae (strain ATCC 204508 / S288c) (Baker's yeast).